We begin with the raw amino-acid sequence, 334 residues long: MKKIRPLTEADVTAESAFFMQRRQVLKALGISAAALSLPSTAQADLFSWFKGNDRPKAPAGKPLEFSQPAAWRSDLALTPEDKVTGYNNFYEFGLDKADPAANAGSLKTEPWTLKISGEVAKPFTLDYDDLTHRFPLEERIYRMRCVEAWSMVVPWIGFPLYKLLAQAQPTSHAKYVAFETLYAPDDMPGQKDRFIGGGLKYPYVEGLRLDEAMHPLTLMTVGVYGKALPPQNGAPIRLIVPWKYGFKGIKSIVSIKLTRERPLTTWNLSAPNEYGFYANVNPHVDHPRWSQATERFIGSGGILDVQRQPTLLFNGYANEVASLYRGLNLRENF.

A signal peptide (tat-type signal) is located at residues 1 to 44 (MKKIRPLTEADVTAESAFFMQRRQVLKALGISAAALSLPSTAQA). Residues Asn-88, 91–92 (YE), Cys-146, Thr-181, Asn-233, Arg-238, and 249–251 (GIK) contribute to the Mo-molybdopterin site.

Belongs to the MsrP family. In terms of assembly, heterodimer of a catalytic subunit (MsrP) and a heme-binding subunit (MsrQ). The cofactor is Mo-molybdopterin. Post-translationally, predicted to be exported by the Tat system. The position of the signal peptide cleavage has not been experimentally proven.

It localises to the periplasm. It carries out the reaction L-methionyl-[protein] + a quinone + H2O = L-methionyl-(S)-S-oxide-[protein] + a quinol. The catalysed reaction is L-methionyl-[protein] + a quinone + H2O = L-methionyl-(R)-S-oxide-[protein] + a quinol. Part of the MsrPQ system that repairs oxidized periplasmic proteins containing methionine sulfoxide residues (Met-O), using respiratory chain electrons. Thus protects these proteins from oxidative-stress damage caused by reactive species of oxygen and chlorine generated by the host defense mechanisms. MsrPQ is essential for the maintenance of envelope integrity under bleach stress, rescuing a wide series of structurally unrelated periplasmic proteins from methionine oxidation, including the primary periplasmic chaperone SurA and the lipoprotein Pal. The catalytic subunit MsrP is non-stereospecific, being able to reduce both (R-) and (S-) diastereoisomers of methionine sulfoxide. This is Protein-methionine-sulfoxide reductase catalytic subunit MsrP from Salmonella dublin (strain CT_02021853).